The following is a 236-amino-acid chain: 5'-methylthioadenosine/S-adenosylhomocysteine nucleosidase (236 aa).

Residue Glu-12 is the Proton acceptor of the active site. Substrate is bound by residues Gly-78, Ile-153, and 174 to 175 (ME). Residue Asp-198 is the Proton donor of the active site.

It belongs to the PNP/UDP phosphorylase family. MtnN subfamily.

It catalyses the reaction S-adenosyl-L-homocysteine + H2O = S-(5-deoxy-D-ribos-5-yl)-L-homocysteine + adenine. It carries out the reaction S-methyl-5'-thioadenosine + H2O = 5-(methylsulfanyl)-D-ribose + adenine. The catalysed reaction is 5'-deoxyadenosine + H2O = 5-deoxy-D-ribose + adenine. It functions in the pathway amino-acid biosynthesis; L-methionine biosynthesis via salvage pathway; S-methyl-5-thio-alpha-D-ribose 1-phosphate from S-methyl-5'-thioadenosine (hydrolase route): step 1/2. Functionally, catalyzes the irreversible cleavage of the glycosidic bond in both 5'-methylthioadenosine (MTA) and S-adenosylhomocysteine (SAH/AdoHcy) to adenine and the corresponding thioribose, 5'-methylthioribose and S-ribosylhomocysteine, respectively. Also cleaves 5'-deoxyadenosine, a toxic by-product of radical S-adenosylmethionine (SAM) enzymes, into 5-deoxyribose and adenine. This Shewanella baltica (strain OS223) protein is 5'-methylthioadenosine/S-adenosylhomocysteine nucleosidase.